Reading from the N-terminus, the 253-residue chain is 5'/3'-nucleotidase SurE (253 aa).

Residues aspartate 8, aspartate 9, serine 39, and asparagine 92 each coordinate a divalent metal cation.

It belongs to the SurE nucleotidase family. The cofactor is a divalent metal cation.

It localises to the cytoplasm. It catalyses the reaction a ribonucleoside 5'-phosphate + H2O = a ribonucleoside + phosphate. It carries out the reaction a ribonucleoside 3'-phosphate + H2O = a ribonucleoside + phosphate. The enzyme catalyses [phosphate](n) + H2O = [phosphate](n-1) + phosphate + H(+). Functionally, nucleotidase with a broad substrate specificity as it can dephosphorylate various ribo- and deoxyribonucleoside 5'-monophosphates and ribonucleoside 3'-monophosphates with highest affinity to 3'-AMP. Also hydrolyzes polyphosphate (exopolyphosphatase activity) with the preference for short-chain-length substrates (P20-25). Might be involved in the regulation of dNTP and NTP pools, and in the turnover of 3'-mononucleotides produced by numerous intracellular RNases (T1, T2, and F) during the degradation of various RNAs. This Salmonella paratyphi A (strain AKU_12601) protein is 5'/3'-nucleotidase SurE.